Consider the following 66-residue polypeptide: Ranalexin (66 aa).

The N-terminal stretch at 1–20 (MFTLKKSLLLLFFLGTINLS) is a signal peptide. A propeptide spans 21–44 (LCEEERNAEEERRDNPDERDVEVE) (small acidic peptide). Cys-60 and Cys-66 are disulfide-bonded.

This sequence belongs to the frog skin active peptide (FSAP) family. Brevinin subfamily. Expressed by the skin dorsal glands.

Its subcellular location is the secreted. Functionally, potent microbicidal activity, active against S.aureus and E.coli. It also acts as a membrane-disruptive agent at higher concentrations. This Aquarana catesbeiana (American bullfrog) protein is Ranalexin.